The primary structure comprises 162 residues: Mitochondrial fission process protein 1 (162 aa).

Helical transmembrane passes span 36–56 (SLVK…YVAA), 81–101 (AIIA…IPGF), and 128–148 (TVTA…DAFV).

Belongs to the MTFP1 family.

Its subcellular location is the mitochondrion inner membrane. Involved in the mitochondrial division probably by regulating membrane fission. Loss-of-function leads to apoptosis. In Caenorhabditis briggsae, this protein is Mitochondrial fission process protein 1.